The chain runs to 403 residues: Cysteine desulfurase IscS (403 aa).

Pyridoxal 5'-phosphate contacts are provided by residues 75–76 (AT), Asn155, Gln183, and 203–205 (SAH). Lys206 is subject to N6-(pyridoxal phosphate)lysine. Thr243 lines the pyridoxal 5'-phosphate pocket. Cys328 acts as the Cysteine persulfide intermediate in catalysis. Cys328 lines the [2Fe-2S] cluster pocket.

It belongs to the class-V pyridoxal-phosphate-dependent aminotransferase family. NifS/IscS subfamily. In terms of assembly, homodimer. Forms a heterotetramer with IscU, interacts with other sulfur acceptors. Pyridoxal 5'-phosphate serves as cofactor.

Its subcellular location is the cytoplasm. It catalyses the reaction (sulfur carrier)-H + L-cysteine = (sulfur carrier)-SH + L-alanine. It functions in the pathway cofactor biosynthesis; iron-sulfur cluster biosynthesis. Master enzyme that delivers sulfur to a number of partners involved in Fe-S cluster assembly, tRNA modification or cofactor biosynthesis. Catalyzes the removal of elemental sulfur atoms from cysteine to produce alanine. Functions as a sulfur delivery protein for Fe-S cluster synthesis onto IscU, an Fe-S scaffold assembly protein, as well as other S acceptor proteins. The chain is Cysteine desulfurase IscS from Psychromonas ingrahamii (strain DSM 17664 / CCUG 51855 / 37).